We begin with the raw amino-acid sequence, 356 residues long: Biotin synthase (356 aa).

The segment at 1 to 28 is disordered; that stretch reads MTIQANVPTGDETSDEASRQTSNEASSE. One can recognise a Radical SAM core domain in the interval 77-302; that stretch reads EDVEVEGIIS…RTVLRYAGGR (226 aa). [4Fe-4S] cluster is bound by residues Cys92, Cys96, and Cys99. Residues Cys135, Cys168, Cys227, and Arg297 each coordinate [2Fe-2S] cluster.

It belongs to the radical SAM superfamily. Biotin synthase family. Homodimer. [4Fe-4S] cluster is required as a cofactor. The cofactor is [2Fe-2S] cluster.

The enzyme catalyses (4R,5S)-dethiobiotin + (sulfur carrier)-SH + 2 reduced [2Fe-2S]-[ferredoxin] + 2 S-adenosyl-L-methionine = (sulfur carrier)-H + biotin + 2 5'-deoxyadenosine + 2 L-methionine + 2 oxidized [2Fe-2S]-[ferredoxin]. Its pathway is cofactor biosynthesis; biotin biosynthesis; biotin from 7,8-diaminononanoate: step 2/2. Its function is as follows. Catalyzes the conversion of dethiobiotin (DTB) to biotin by the insertion of a sulfur atom into dethiobiotin via a radical-based mechanism. The protein is Biotin synthase of Arthrobacter sp. (strain FB24).